The sequence spans 198 residues: Angiopoietin-like protein 8 (198 aa).

Residues 1–21 form the signal peptide; that stretch reads MPVPALCLLWALAMVTRPASA.

This sequence belongs to the ANGPTL8 family. As to quaternary structure, interacts with ANGPTL3. Post-translationally, proteolytically cleaved at the N-terminus. As to expression, predominantly expressed in liver. Also expressed in adipose tissues.

The protein resides in the secreted. Functionally, hormone that acts as a blood lipid regulator by regulating serum triglyceride levels. May be involved in the metabolic transition between fasting and refeeding: required to direct fatty acids to adipose tissue for storage in the fed state. This is Angiopoietin-like protein 8 from Homo sapiens (Human).